The primary structure comprises 605 residues: Elongation factor 4 (605 aa).

The region spanning Lys11 to Thr193 is the tr-type G domain. GTP is bound by residues Asp23–Thr28 and Asn140–Asp143.

It belongs to the TRAFAC class translation factor GTPase superfamily. Classic translation factor GTPase family. LepA subfamily.

It localises to the cell inner membrane. The enzyme catalyses GTP + H2O = GDP + phosphate + H(+). Its function is as follows. Required for accurate and efficient protein synthesis under certain stress conditions. May act as a fidelity factor of the translation reaction, by catalyzing a one-codon backward translocation of tRNAs on improperly translocated ribosomes. Back-translocation proceeds from a post-translocation (POST) complex to a pre-translocation (PRE) complex, thus giving elongation factor G a second chance to translocate the tRNAs correctly. Binds to ribosomes in a GTP-dependent manner. The chain is Elongation factor 4 from Acinetobacter baumannii (strain SDF).